Reading from the N-terminus, the 141-residue chain is Cystatin (141 aa).

Residues 1–26 form the signal peptide; sequence MVHSQLPVAAPLRLLCALLLLPSATM. Residues 29 to 129 enclose the Cystatin domain; it reads GGLYPRSVTD…CHFQVWSRPW (101 aa). The short motif at 73–77 is the Secondary area of contact element; that stretch reads QVVTG. 2 cysteine pairs are disulfide-bonded: C91-C107 and C120-C140.

The protein belongs to the cystatin family. In terms of tissue distribution, expressed by the venom gland at an extremely low level (at protein level).

It is found in the secreted. Its function is as follows. Inhibits various C1 cysteine proteases including cathepsin L, papain and cathepsin B. This protein has no toxic activity and its function in the venom is unknown. It may play a role as a housekeeping or regulatory protein. In Tropidechis carinatus (Australian rough-scaled snake), this protein is Cystatin.